Here is a 124-residue protein sequence, read N- to C-terminus: U33-theraphotoxin-Cg1c (124 aa).

The first 17 residues, M1–A17, serve as a signal peptide directing secretion. Disulfide bonds link C26–C37, C31–C51, C36–C75, C61–C83, and C77–C94. Residues R93–Q108 show a composition bias toward basic and acidic residues. The interval R93–G124 is disordered. The span at G109–E118 shows a compositional bias: acidic residues.

The protein belongs to the neurotoxin 32 family. Expressed by the venom gland.

It localises to the secreted. The protein is U33-theraphotoxin-Cg1c of Chilobrachys guangxiensis (Chinese earth tiger tarantula).